Consider the following 228-residue polypeptide: Probable endo-1,4-beta-xylanase A (228 aa).

The signal sequence occupies residues 1 to 18; that stretch reads MVSFSYLLLACSAIGALA. A glycan (N-linked (GlcNAc...) asparagine) is linked at Asn29. The region spanning 40–228 is the GH11 domain; it reads AGTPSSTGWN…SSGSASITVY (189 aa). Glu124 functions as the Nucleophile in the catalytic mechanism. Residue Glu215 is the Proton donor of the active site.

Belongs to the glycosyl hydrolase 11 (cellulase G) family.

The protein resides in the secreted. The enzyme catalyses Endohydrolysis of (1-&gt;4)-beta-D-xylosidic linkages in xylans.. The protein operates within glycan degradation; xylan degradation. Functionally, endo-1,4-beta-xylanase involved in the hydrolysis of xylan, a major structural heterogeneous polysaccharide found in plant biomass representing the second most abundant polysaccharide in the biosphere, after cellulose. This chain is Probable endo-1,4-beta-xylanase A (xlnA), found in Aspergillus fumigatus (strain CBS 144.89 / FGSC A1163 / CEA10) (Neosartorya fumigata).